A 468-amino-acid chain; its full sequence is Midnolin (468 aa).

The Ubiquitin-like domain maps to M31–G105. Disordered stretches follow at residues P182–K264 and L404–D447. The segment covering A185 to V201 has biased composition (low complexity). Over residues P202 to P213 the composition is skewed to pro residues. Composition is skewed to low complexity over residues S237–P260 and S419–S431.

As to quaternary structure, interacts with GCK; the interaction occurs preferentially at low glucose levels. Interacts with the proteasome.

Its subcellular location is the nucleus. The protein resides in the nucleolus. It localises to the cytoplasm. The protein localises to the cytosol. Functionally, facilitates the ubiquitin-independent proteasomal degradation of stimulus-induced transcription factors such as FOSB, EGR1, NR4A1, and IRF4 to the proteasome for degradation. Promotes also the degradation of other substrates such as CBX4. Plays a role in inhibiting the activity of glucokinase GCK and both glucose-induced and basal insulin secretion. The polypeptide is Midnolin (MIDN) (Homo sapiens (Human)).